Consider the following 95-residue polypeptide: Protein TusB (95 aa).

It belongs to the DsrH/TusB family. Heterohexamer, formed by a dimer of trimers. The hexameric TusBCD complex contains 2 copies each of TusB, TusC and TusD. The TusBCD complex interacts with TusE.

Its subcellular location is the cytoplasm. Its function is as follows. Part of a sulfur-relay system required for 2-thiolation of 5-methylaminomethyl-2-thiouridine (mnm(5)s(2)U) at tRNA wobble positions. In Erwinia tasmaniensis (strain DSM 17950 / CFBP 7177 / CIP 109463 / NCPPB 4357 / Et1/99), this protein is Protein TusB.